Here is a 122-residue protein sequence, read N- to C-terminus: Iron-sulfur cluster insertion protein ErpA (122 aa).

Iron-sulfur cluster is bound by residues cysteine 50, cysteine 114, and cysteine 116.

It belongs to the HesB/IscA family. As to quaternary structure, homodimer. Requires iron-sulfur cluster as cofactor.

Its function is as follows. Required for insertion of 4Fe-4S clusters for at least IspG. This Alkalilimnicola ehrlichii (strain ATCC BAA-1101 / DSM 17681 / MLHE-1) protein is Iron-sulfur cluster insertion protein ErpA.